The sequence spans 636 residues: TNFAIP3-interacting protein 1 (636 aa).

Residues 20–73 are a coiled coil; sequence EASAAFERLVKENSRLKEKMQGIKMLGELLEESQMEATRLRQKAEELVKDNELL. Over residues 61–71 the composition is skewed to basic and acidic residues; sequence QKAEELVKDNE. 2 disordered regions span residues 61-151 and 252-283; these read QKAE…GPLP and MSNG…QQQA. Residue serine 77 is modified to Phosphoserine. The interval 94–412 is interaction with Nef; sequence SNVTASPTAP…SPLTRQREYQ (319 aa). A compositionally biased stretch (polar residues) spans 131-142; the sequence is EEQNSPESSSHA. Residues 196 to 258 are a coiled coil; it reads SKVHKNEQRT…KLLMSNGNKE (63 aa). Serine 284 carries the phosphoserine modification. Residues 294 to 535 adopt a coiled-coil conformation; the sequence is VALGAAEKKV…RKAKASGERY (242 aa). An interaction with Shigella flexneri ipah9.8 region spans residues 351–367; it reads DLEAEREQKQRDFDRKL. Residue serine 403 is modified to Phosphoserine. The required for inhibitory activity of TNF-induced NF-kappa-B activation stretch occupies residues 431 to 588; it reads TPPSSPPTAF…MEHPPPLPNS (158 aa). Threonine 438 carries the phosphothreonine modification. Serine 442 bears the Phosphoserine mark. The interval 452–510 is ubiquitin-binding domain (UBD); it reads KQELVTQNELLKQQVKIFEEDFQRERSDRERMNEEKEELKKQVEKLQAQVTLSNAQLKA. Residues 524–530 carry the Nuclear localization signal motif; the sequence is QKRKAKA. A Phosphotyrosine modification is found at tyrosine 552. Arginine 571 carries the post-translational modification Asymmetric dimethylarginine. Arginine 599 bears the Asymmetric dimethylarginine; alternate mark. Omega-N-methylarginine; alternate is present on arginine 599. The disordered stretch occupies residues 603-636; that stretch reads GGVRNPNQSSQVMDPPTARPTEPESPKNDREGPQ. The span at 623 to 636 shows a compositional bias: basic and acidic residues; it reads TEPESPKNDREGPQ. A Phosphoserine modification is found at serine 627.

Interacts with TNFAIP3 and IKBKG (polyubiquitinated); facilitates TNFAIP3-mediated de-ubiquitination of NEMO/IKBKG. Interacts with polyubiquitin. Interacts with MAPK1, SELPLG and PIK3CD. Interacts with IRAK1 (polyubiquitinated). Interacts with MYD88; the interaction is indicative for participation in an activated TLR-signaling complex. Interacts with HIV-1 matrix protein. Interacts with TAX1BP1. In terms of assembly, (Microbial infection) Interacts with Shigella flexneri ipah9.8; the interaction promotes polyubiquitination of IKBKG. Post-translationally, phosphorylation at Tyr-552 by SRC-family kinases recruits phosphoinositide-3-kinase (PI3K) PIK3CD:p85 heterodimer which results in integrin activation and leukocyte adhesion to activated endothelium during inflammation. Ubiquitous. Strongly expressed in peripheral blood lymphocytes, spleen and skeletal muscle, and is weakly expressed in the brain. In peripheral blood mononucleocytes, isoform 4 is mainly expressed and isoform 1 and isoform 7 are almost not expressed. Expression of isoform 1 and isoform 7 increases in leukemic cells.

It localises to the cytoplasm. The protein localises to the nucleus. Functionally, inhibits NF-kappa-B activation and TNF-induced NF-kappa-B-dependent gene expression by regulating TAX1BP1 and A20/TNFAIP3-mediated deubiquitination of IKBKG; proposed to link A20/TNFAIP3 to ubiquitinated IKBKG. Involved in regulation of EGF-induced ERK1/ERK2 signaling pathway; blocks MAPK3/MAPK1 nuclear translocation and MAPK1-dependent transcription. Increases cell surface CD4(T4) antigen expression. Involved in the anti-inflammatory response of macrophages and positively regulates TLR-induced activation of CEBPB. Involved in the prevention of autoimmunity; this function implicates binding to polyubiquitin. Involved in leukocyte integrin activation during inflammation; this function is mediated by association with SELPLG and dependent on phosphorylation by SRC-family kinases. Interacts with HIV-1 matrix protein and is packaged into virions and overexpression can inhibit viral replication. May regulate matrix nuclear localization, both nuclear import of PIC (Preintegration complex) and export of GAG polyprotein and viral genomic RNA during virion production. In case of infection, promotes association of IKBKG with Shigella flexneri E3 ubiquitin-protein ligase ipah9.8 p which in turn promotes polyubiquitination of IKBKG leading to its proteasome-dependent degradation and thus is perturbing NF-kappa-B activation during bacterial infection. This is TNFAIP3-interacting protein 1 (TNIP1) from Homo sapiens (Human).